A 420-amino-acid chain; its full sequence is Carboxypeptidase A4 (420 aa).

A signal peptide spans 1-16 (MKWLLFFGALIGAGIC). Residues 17 to 113 (GRDKFFGDQV…EMQHNEGIER (97 aa)) constitute a propeptide, activation peptide. Positions 69, 71, 118, 122, 123, 126, and 162 each coordinate a protein. The region spanning 121-415 (AYHPLEAIYH…LGLKTIMEHV (295 aa)) is the Peptidase M14 domain. 2 residues coordinate Zn(2+): His180 and Glu183. Cys249 and Cys272 are disulfide-bonded. The N-linked (GlcNAc...) asparagine glycan is linked to Asn259. Residue His307 coordinates Zn(2+). Glu381 serves as the catalytic Proton donor/acceptor.

The protein belongs to the peptidase M14 family. Interacts with LXN. Requires Zn(2+) as cofactor.

The protein localises to the secreted. Its function is as follows. Metalloprotease that cleaves hydrophobic C-terminal residues with a preference for -Phe, -Leu, -Ile, -Met, -Tyr and -Val. May function in peptide hormone and/or neuropeptide catabolism. The sequence is that of Carboxypeptidase A4 (Cpa4) from Mus musculus (Mouse).